A 665-amino-acid polypeptide reads, in one-letter code: UvrABC system protein B (665 aa).

Residues 25–176 (NSIEKGNRFQ…NQRQLLRDLV (152 aa)) enclose the Helicase ATP-binding domain. An ATP-binding site is contributed by 38–45 (GATGTGKT). The Beta-hairpin signature appears at 91–114 (YYDYYQPEAYIPVSDTYIEKSASI). One can recognise a Helicase C-terminal domain in the interval 429-595 (QVDDLLGEIK…PIVTRSSNAI (167 aa)). One can recognise a UVR domain in the interval 626–661 (PELIGQLEEQMKEAAKKLEFEEAAKYRDRIQHLRDK).

It belongs to the UvrB family. Forms a heterotetramer with UvrA during the search for lesions. Interacts with UvrC in an incision complex.

The protein localises to the cytoplasm. Functionally, the UvrABC repair system catalyzes the recognition and processing of DNA lesions. A damage recognition complex composed of 2 UvrA and 2 UvrB subunits scans DNA for abnormalities. Upon binding of the UvrA(2)B(2) complex to a putative damaged site, the DNA wraps around one UvrB monomer. DNA wrap is dependent on ATP binding by UvrB and probably causes local melting of the DNA helix, facilitating insertion of UvrB beta-hairpin between the DNA strands. Then UvrB probes one DNA strand for the presence of a lesion. If a lesion is found the UvrA subunits dissociate and the UvrB-DNA preincision complex is formed. This complex is subsequently bound by UvrC and the second UvrB is released. If no lesion is found, the DNA wraps around the other UvrB subunit that will check the other stand for damage. The protein is UvrABC system protein B of Gloeothece citriformis (strain PCC 7424) (Cyanothece sp. (strain PCC 7424)).